The sequence spans 120 residues: Basic phospholipase A2 homolog LmutTX (120 aa).

Intrachain disulfides connect cysteine 26/cysteine 114, cysteine 28/cysteine 44, cysteine 43/cysteine 95, cysteine 49/cysteine 120, cysteine 50/cysteine 88, cysteine 57/cysteine 81, and cysteine 75/cysteine 86.

The protein belongs to the phospholipase A2 family. Group II subfamily. K49 sub-subfamily. As to quaternary structure, monomer. Expressed by the venom gland.

The protein resides in the secreted. Snake venom phospholipase A2 homolog that lacks enzymatic activity. Shows moderate cytotoxicity against C2C12 myotubes (activity above 200 ug/mL). Also shows antibacterial activity against both Gram-positive and Gram-negative bacteria. A model of myotoxic mechanism has been proposed: an apo Lys49-PLA2 is activated by the entrance of a hydrophobic molecule (e.g. fatty acid) at the hydrophobic channel of the protein leading to a reorientation of a monomer. This reorientation causes a transition between 'inactive' to 'active' states, causing alignment of C-terminal and membrane-docking sites (MDoS) side-by-side and putting the membrane-disruption sites (MDiS) in the same plane, exposed to solvent and in a symmetric position for both monomers. The MDoS region stabilizes the toxin on membrane by the interaction of charged residues with phospholipid head groups. Subsequently, the MDiS region destabilizes the membrane with penetration of hydrophobic residues. This insertion causes a disorganization of the membrane, allowing an uncontrolled influx of ions (i.e. calcium and sodium), and eventually triggering irreversible intracellular alterations and cell death. The chain is Basic phospholipase A2 homolog LmutTX from Lachesis muta muta (Bushmaster).